A 403-amino-acid chain; its full sequence is Acetylornithine aminotransferase (403 aa).

Pyridoxal 5'-phosphate contacts are provided by residues 107–108 (GA) and Phe140. Arg143 lines the N(2)-acetyl-L-ornithine pocket. Residue 225–228 (DEVQ) participates in pyridoxal 5'-phosphate binding. Lys254 is modified (N6-(pyridoxal phosphate)lysine). Residue Ser282 participates in N(2)-acetyl-L-ornithine binding. Thr283 contributes to the pyridoxal 5'-phosphate binding site.

Belongs to the class-III pyridoxal-phosphate-dependent aminotransferase family. ArgD subfamily. In terms of assembly, homodimer. It depends on pyridoxal 5'-phosphate as a cofactor.

The protein localises to the cytoplasm. The enzyme catalyses N(2)-acetyl-L-ornithine + 2-oxoglutarate = N-acetyl-L-glutamate 5-semialdehyde + L-glutamate. The protein operates within amino-acid biosynthesis; L-arginine biosynthesis; N(2)-acetyl-L-ornithine from L-glutamate: step 4/4. The sequence is that of Acetylornithine aminotransferase from Vibrio parahaemolyticus serotype O3:K6 (strain RIMD 2210633).